Reading from the N-terminus, the 470-residue chain is Dihydrolipoyl dehydrogenase (470 aa).

FAD is bound by residues 39 to 47 (EKATLGGVC), lysine 56, and alanine 119. Residues cysteine 47 and cysteine 52 are joined by a disulfide bond. NAD(+) is bound by residues 183–187 (GGGYI), glutamate 206, and 272–275 (TVGR). FAD is bound by residues aspartate 315 and alanine 323. Residue histidine 447 is the Proton acceptor of the active site.

Belongs to the class-I pyridine nucleotide-disulfide oxidoreductase family. In terms of assembly, homodimer. Component of two multienzyme complexes: pyruvate dehydrogenase complex and oxoglutarate dehydrogenase complex. Requires FAD as cofactor.

The protein resides in the cytoplasm. The catalysed reaction is N(6)-[(R)-dihydrolipoyl]-L-lysyl-[protein] + NAD(+) = N(6)-[(R)-lipoyl]-L-lysyl-[protein] + NADH + H(+). Functionally, catalyzes the oxidation of dihydrolipoamide to lipoamide. The polypeptide is Dihydrolipoyl dehydrogenase (pdhD) (Bacillus subtilis (strain 168)).